The following is a 463-amino-acid chain: tRNA modification GTPase MnmE (463 aa).

(6S)-5-formyl-5,6,7,8-tetrahydrofolate-binding residues include R30, E92, and R132. A TrmE-type G domain is found at 227–386 (GLRVALVGRP…LVQAVLERCG (160 aa)). N237 is a binding site for K(+). GTP is bound by residues 237 to 242 (NVGKSS), 256 to 262 (TDLPGTT), 281 to 284 (DTAG), and 342 to 345 (NKAD). S241 lines the Mg(2+) pocket. Residues T256, L258, and T261 each contribute to the K(+) site. T262 provides a ligand contact to Mg(2+). Residue K463 participates in (6S)-5-formyl-5,6,7,8-tetrahydrofolate binding.

This sequence belongs to the TRAFAC class TrmE-Era-EngA-EngB-Septin-like GTPase superfamily. TrmE GTPase family. As to quaternary structure, homodimer. Heterotetramer of two MnmE and two MnmG subunits. Requires K(+) as cofactor.

It localises to the cytoplasm. Its function is as follows. Exhibits a very high intrinsic GTPase hydrolysis rate. Involved in the addition of a carboxymethylaminomethyl (cmnm) group at the wobble position (U34) of certain tRNAs, forming tRNA-cmnm(5)s(2)U34. The sequence is that of tRNA modification GTPase MnmE from Synechococcus sp. (strain CC9311).